The primary structure comprises 1351 residues: uncharacterized protein (1351 aa).

Basic and acidic residues predominate over residues 1–17 (MSKKDSKNSPKKSKDTN). Positions 1-31 (MSKKDSKNSPKKSKDTNSDESSSSNAETSSD) are disordered. Low complexity predominate over residues 19–31 (DESSSSNAETSSD).

This is an uncharacterized protein from Acanthamoeba polyphaga mimivirus (APMV).